The chain runs to 236 residues: Lipoprotein NlpE (236 aa).

A signal peptide spans M1 to G20. The N-palmitoyl cysteine moiety is linked to residue C21. C21 carries S-diacylglycerol cysteine lipidation. Positions C21 to L100 are N-terminal domain. Topologically, residues C21–Q236 are periplasmic. A CXXC motif is present at residues C51–C54. A C-terminal domain region spans residues P126 to Q236. Residues M144 to M156 form a could contain a copper-binding motif region. Residues C165 and C231 are joined by a disulfide bond.

In terms of assembly, probably exists as a monomer in vivo, can however form homodimers which swap domains. Post-translationally, palmitoylated. In terms of processing, seems to only form a disulfide bond between Cys-165 and Cys-231. The 2 other cysteine residues may however be chemically active.

The protein resides in the cell outer membrane. Involved in copper homeostasis, could be involved in both copper efflux and the delivery of copper to copper-dependent enzymes. Required for efficient binding of stationary phase cells to hydrophobic surfaces, part of the process of biofilm formation. Functions during envelope stress responses; when overproduced induces degP through the activation of the two-component envelope stress response system CpxA/CpxR. DegP induction seems to require membrane anchoring of this protein. Structural changes and/or interaction of the CXXC motif with its environment may lead to activation of the Cpx stress response. This Escherichia coli (strain K12) protein is Lipoprotein NlpE.